A 381-amino-acid chain; its full sequence is Alkanesulfonate monooxygenase (381 aa).

It belongs to the SsuD family. Homotetramer.

It carries out the reaction an alkanesulfonate + FMNH2 + O2 = an aldehyde + FMN + sulfite + H2O + 2 H(+). Functionally, catalyzes the desulfonation of aliphatic sulfonates. The protein is Alkanesulfonate monooxygenase of Shigella flexneri.